The chain runs to 443 residues: ATP-dependent protease ATPase subunit HslU (443 aa).

Residues I18, 60–65 (GVGKTE), D256, E321, and R393 each bind ATP.

This sequence belongs to the ClpX chaperone family. HslU subfamily. A double ring-shaped homohexamer of HslV is capped on each side by a ring-shaped HslU homohexamer. The assembly of the HslU/HslV complex is dependent on binding of ATP.

The protein resides in the cytoplasm. ATPase subunit of a proteasome-like degradation complex; this subunit has chaperone activity. The binding of ATP and its subsequent hydrolysis by HslU are essential for unfolding of protein substrates subsequently hydrolyzed by HslV. HslU recognizes the N-terminal part of its protein substrates and unfolds these before they are guided to HslV for hydrolysis. In Pasteurella multocida (strain Pm70), this protein is ATP-dependent protease ATPase subunit HslU.